A 93-amino-acid polypeptide reads, in one-letter code: Putative septation protein SpoVG (93 aa).

The protein belongs to the SpoVG family.

Its function is as follows. Could be involved in septation. The chain is Putative septation protein SpoVG from Lachnoclostridium phytofermentans (strain ATCC 700394 / DSM 18823 / ISDg) (Clostridium phytofermentans).